Consider the following 578-residue polypeptide: Putative diflavin flavoprotein A 2 (578 aa).

Residues 48 to 240 (RHGTTYNSFL…LQVVLVATGH (193 aa)) are zinc metallo-hydrolase. 6 residues coordinate Fe cation: His97, Glu99, Asp101, His164, Asp183, and His240. In terms of domain architecture, Flavodoxin-like spans 269–406 (VALFYVDGYG…LCREAGTDLG (138 aa)). A flavodoxin-reductase-like region spans residues 429–578 (IGRLSTGLYI…THHRKLGNHY (150 aa)).

This sequence in the N-terminal section; belongs to the zinc metallo-hydrolase group 3 family. In the C-terminal section; belongs to the flavodoxin reductase family. Fe cation serves as cofactor.

Its function is as follows. Mediates electron transfer from NADH to oxygen, reducing it to water. This modular protein has 3 redox cofactors, in other organisms the same activity requires 2 or 3 proteins. The chain is Putative diflavin flavoprotein A 2 (dfa2) from Synechocystis sp. (strain ATCC 27184 / PCC 6803 / Kazusa).